We begin with the raw amino-acid sequence, 418 residues long: Histidine--tRNA ligase (418 aa).

The protein belongs to the class-II aminoacyl-tRNA synthetase family.

It is found in the cytoplasm. The catalysed reaction is tRNA(His) + L-histidine + ATP = L-histidyl-tRNA(His) + AMP + diphosphate + H(+). The sequence is that of Histidine--tRNA ligase from Methanococcus aeolicus (strain ATCC BAA-1280 / DSM 17508 / OCM 812 / Nankai-3).